The primary structure comprises 551 residues: Tetrachloroethene reductive dehalogenase (551 aa).

Residues 1 to 39 constitute a signal peptide (tat-type signal); it reads MGEINRRNFLKASMLGAAAAAVASASAVKGMVSPLVADA. The 4Fe-4S ferredoxin-type 1 domain maps to 411–440; the sequence is PRKFGVREFCRLCKKCADACPAQAISHEKD. Residues Cys420, Cys423, Cys426, Cys430, Cys467, Cys478, Cys481, and Cys485 each coordinate [4Fe-4S] cluster. In terms of domain architecture, 4Fe-4S ferredoxin-type 2 spans 478 to 496; the sequence is CANCVAVCSWNKVETWNHD.

Belongs to the PceA family. As to quaternary structure, monomer. It depends on [4Fe-4S] cluster as a cofactor. Corrinoid serves as cofactor. Predicted to be exported by the Tat system. The position of the signal peptide cleavage has been experimentally proven.

It localises to the cell membrane. The enzyme catalyses trichloroethene + chloride + A + H(+) = tetrachloroethene + AH2. It catalyses the reaction trichloroethene + AH2 = (Z)-1,2-dichloroethene + chloride + A + H(+). Activity is inhibited by ammonium ions. Photoreversibly inactivated by 1-iodopropane. In terms of biological role, catalyzes the reductive dechlorination of tetrachloroethene (PCE) to trichloroethene (TCE) and of trichloroethene to cis-1,2-dichloroethene (DCE). Can also use trichlorofluoroethene, tetrachloromethane, hexachloroethane, tetrachloroethane, trichloroethane and 1,1,1-trichloro-2,2,2-trifluoroethane. Menaquinone can act as the electron donor. Reduced methyl viologen can act as the artificial electron donor. The polypeptide is Tetrachloroethene reductive dehalogenase (Dehalobacter restrictus (strain DSM 9455 / PER-K23)).